The primary structure comprises 142 residues: Membrane protein YneK (142 aa).

A helical membrane pass occupies residues Phe6 to Phe26.

In terms of assembly, interacts with the N-terminal D1 domain of dynamin-like protein DynA.

Its subcellular location is the cell membrane. The polypeptide is Membrane protein YneK (yneK) (Bacillus subtilis (strain 168)).